Reading from the N-terminus, the 306-residue chain is D-alanine--D-alanine ligase (306 aa).

Residues Lys107 to Glu303 form the ATP-grasp domain. Residue Ile134–Thr189 participates in ATP binding. Asp257, Glu270, and Asn272 together coordinate Mg(2+).

The protein belongs to the D-alanine--D-alanine ligase family. It depends on Mg(2+) as a cofactor. Mn(2+) is required as a cofactor.

It localises to the cytoplasm. The enzyme catalyses 2 D-alanine + ATP = D-alanyl-D-alanine + ADP + phosphate + H(+). Its pathway is cell wall biogenesis; peptidoglycan biosynthesis. Its function is as follows. Cell wall formation. This Pseudoalteromonas translucida (strain TAC 125) protein is D-alanine--D-alanine ligase.